The sequence spans 681 residues: Oligopeptidase A (681 aa).

H470 serves as a coordination point for Zn(2+). Residue E471 is part of the active site. The Zn(2+) site is built by H474 and H477.

This sequence belongs to the peptidase M3 family. Requires Zn(2+) as cofactor.

The enzyme catalyses Hydrolysis of oligopeptides, with broad specificity. Gly or Ala commonly occur as P1 or P1' residues, but more distant residues are also important, as is shown by the fact that Z-Gly-Pro-Gly-|-Gly-Pro-Ala is cleaved, but not Z-(Gly)(5).. Its function is as follows. May play a specific role in the degradation of signal peptides after they are released from precursor forms of secreted proteins. Can cleave N-acetyl-L-Ala(4). The sequence is that of Oligopeptidase A (prlC) from Haemophilus influenzae (strain ATCC 51907 / DSM 11121 / KW20 / Rd).